The following is a 515-amino-acid chain: Tabersonine 6,7-epoxidase isoform 2 (515 aa).

The chain crosses the membrane as a helical span at residues 1 to 21; sequence MEFVVSPFAFLIFFFILLKMI. Asn-173, Asn-259, and Asn-352 each carry an N-linked (GlcNAc...) asparagine glycan. Cys-449 serves as a coordination point for heme.

This sequence belongs to the cytochrome P450 family. Heme is required as a cofactor. As to expression, mainly expressed in aerial organs, including stems, leaves and flowers.

Its subcellular location is the endoplasmic reticulum membrane. It carries out the reaction (-)-tabersonine + reduced [NADPH--hemoprotein reductase] + O2 = lochnericine + oxidized [NADPH--hemoprotein reductase] + H2O + H(+). It participates in alkaloid biosynthesis. Component of the monoterpenoid indole alkaloids (MIAs, e.g. echitovenine, tabersonine, lochnericine, 19-hydroxytabersonine and horhammericine) biosynthetic pathway; MIAs are used in cancer treatment and other medical applications. Cytochrome P450 catalyzing the conversion of tabersonine to lochnericine. This is Tabersonine 6,7-epoxidase isoform 2 from Catharanthus roseus (Madagascar periwinkle).